A 100-amino-acid chain; its full sequence is MTTATTLGDAVFSLNMTRGEDALYKSSGAIVAAIVVVVIIIVTLVLILLKMYNRRMRTRRELEPKSPKPPVPPALDPSSNGSQQPATVTFDPANVHVETR.

Residues 1-28 (MTTATTLGDAVFSLNMTRGEDALYKSSG) lie on the Extracellular side of the membrane. Residues 29-49 (AIVAAIVVVVIIIVTLVLILL) traverse the membrane as a helical segment. Over 50–100 (KMYNRRMRTRRELEPKSPKPPVPPALDPSSNGSQQPATVTFDPANVHVETR) the chain is Cytoplasmic. The disordered stretch occupies residues 58–100 (TRRELEPKSPKPPVPPALDPSSNGSQQPATVTFDPANVHVETR).

Glycosylated. As to expression, found in the peripheral nervous system (PNS) Schwann cells (at protein level). Expressed in the PNS, primarily limited to Schwann cells.

It localises to the cell membrane. In terms of biological role, plays a role in myelin formation. The polypeptide is Noncompact myelin-associated protein (Ncmap) (Mus musculus (Mouse)).